Consider the following 295-residue polypeptide: Golgi-associated RAB2 interactor protein 1A (295 aa).

The tract at residues 187–206 is disordered; sequence MPNSSTETTPESSRPASSQS. Low complexity predominate over residues 190–206; the sequence is SSTETTPESSRPASSQS. Phosphoserine is present on residues Ser-220, Ser-221, Ser-251, and Ser-255.

Belongs to the GARIN family. In terms of assembly, interacts (via N-terminus) with RAB2B (in GTP-bound form).

The protein resides in the golgi apparatus. In terms of biological role, RAB2B effector protein required for accurate acrosome formation and normal male fertility. The protein is Golgi-associated RAB2 interactor protein 1A (Garin1a) of Rattus norvegicus (Rat).